The chain runs to 419 residues: Serine hydroxymethyltransferase (419 aa).

(6S)-5,6,7,8-tetrahydrofolate contacts are provided by residues L121 and 125–127 (GHL). Residue K229 is modified to N6-(pyridoxal phosphate)lysine.

This sequence belongs to the SHMT family. As to quaternary structure, homodimer. Requires pyridoxal 5'-phosphate as cofactor.

Its subcellular location is the cytoplasm. The enzyme catalyses (6R)-5,10-methylene-5,6,7,8-tetrahydrofolate + glycine + H2O = (6S)-5,6,7,8-tetrahydrofolate + L-serine. Its pathway is one-carbon metabolism; tetrahydrofolate interconversion. It functions in the pathway amino-acid biosynthesis; glycine biosynthesis; glycine from L-serine: step 1/1. In terms of biological role, catalyzes the reversible interconversion of serine and glycine with tetrahydrofolate (THF) serving as the one-carbon carrier. This reaction serves as the major source of one-carbon groups required for the biosynthesis of purines, thymidylate, methionine, and other important biomolecules. Also exhibits THF-independent aldolase activity toward beta-hydroxyamino acids, producing glycine and aldehydes, via a retro-aldol mechanism. This chain is Serine hydroxymethyltransferase, found in Streptomyces griseus subsp. griseus (strain JCM 4626 / CBS 651.72 / NBRC 13350 / KCC S-0626 / ISP 5235).